The sequence spans 532 residues: CTP synthase (532 aa).

An amidoligase domain region spans residues 1–267; it reads MAKFIFVTGG…QDIIIEQLQL (267 aa). S13 provides a ligand contact to CTP. S13 provides a ligand contact to UTP. 14–19 contacts ATP; that stretch reads GLGKGI. Y54 is an L-glutamine binding site. ATP is bound at residue D71. Mg(2+) contacts are provided by D71 and E141. Residues 148 to 150, 188 to 193, and K224 contribute to the CTP site; these read DIE and KTKPIQ. UTP is bound by residues 188–193 and K224; that span reads KTKPIQ. The region spanning 292–532 is the Glutamine amidotransferase type-1 domain; that stretch reads EISFVGKYIE…FIKAIIENNK (241 aa). Position 354 (G354) interacts with L-glutamine. C381 (nucleophile; for glutamine hydrolysis) is an active-site residue. L-glutamine-binding positions include 382–385, E405, and R461; that span reads LGMQ. Residues H506 and E508 contribute to the active site.

It belongs to the CTP synthase family. In terms of assembly, homotetramer.

The enzyme catalyses UTP + L-glutamine + ATP + H2O = CTP + L-glutamate + ADP + phosphate + 2 H(+). It carries out the reaction L-glutamine + H2O = L-glutamate + NH4(+). It catalyses the reaction UTP + NH4(+) + ATP = CTP + ADP + phosphate + 2 H(+). Its pathway is pyrimidine metabolism; CTP biosynthesis via de novo pathway; CTP from UDP: step 2/2. With respect to regulation, allosterically activated by GTP, when glutamine is the substrate; GTP has no effect on the reaction when ammonia is the substrate. The allosteric effector GTP functions by stabilizing the protein conformation that binds the tetrahedral intermediate(s) formed during glutamine hydrolysis. Inhibited by the product CTP, via allosteric rather than competitive inhibition. Catalyzes the ATP-dependent amination of UTP to CTP with either L-glutamine or ammonia as the source of nitrogen. Regulates intracellular CTP levels through interactions with the four ribonucleotide triphosphates. In Mycoplasma capricolum subsp. capricolum (strain California kid / ATCC 27343 / NCTC 10154), this protein is CTP synthase.